The following is an 801-amino-acid chain: Leucine--tRNA ligase (801 aa).

The 'HIGH' region signature appears at 40-51; it reads PYPSGAGLHVGH. A 'KMSKS' region motif is present at residues 576-580; sequence KMSKS. Residue Lys579 participates in ATP binding.

It belongs to the class-I aminoacyl-tRNA synthetase family.

It localises to the cytoplasm. The enzyme catalyses tRNA(Leu) + L-leucine + ATP = L-leucyl-tRNA(Leu) + AMP + diphosphate. In Exiguobacterium sibiricum (strain DSM 17290 / CCUG 55495 / CIP 109462 / JCM 13490 / 255-15), this protein is Leucine--tRNA ligase.